The primary structure comprises 258 residues: Phosphate import ATP-binding protein PstB (258 aa).

The ABC transporter domain maps to 13–253 (IKIENLNLWY…PREKSTEDYI (241 aa)). 45-52 (GPSGCGKS) is a binding site for ATP.

The protein belongs to the ABC transporter superfamily. Phosphate importer (TC 3.A.1.7) family. In terms of assembly, the complex is composed of two ATP-binding proteins (PstB), two transmembrane proteins (PstC and PstA) and a solute-binding protein (PstS).

It localises to the cell membrane. The catalysed reaction is phosphate(out) + ATP + H2O = ADP + 2 phosphate(in) + H(+). Its function is as follows. Part of the ABC transporter complex PstSACB involved in phosphate import. Responsible for energy coupling to the transport system. This Methanosarcina barkeri (strain Fusaro / DSM 804) protein is Phosphate import ATP-binding protein PstB.